The sequence spans 637 residues: Chaperone protein DnaK (637 aa).

Residue Thr-196 is modified to Phosphothreonine; by autocatalysis. Disordered stretches follow at residues 503-525 and 598-637; these read AEIN…RKEE and SGAG…DDKK. A compositionally biased stretch (low complexity) spans 598–619; it reads SGAGAAQAQPEAPQNSGSSQSS.

It belongs to the heat shock protein 70 family.

In terms of biological role, acts as a chaperone. This Chlorobium chlorochromatii (strain CaD3) protein is Chaperone protein DnaK.